Consider the following 357-residue polypeptide: MSLTRLLIKDFRNIESADLALSPGFNFLVGANGSGKTSVLEAIYTLGHGRAFRSLQIGRVIRHEQDAFVLHGRLQGEERETAIGLTKDKQGDSKVRIDGTDGHKVAELAHLMPMQLITPEGFTLLNGGPKYRRAFLDWGCFHNEAGFFTAWSNLKRLVKQRNAALRQVSRYAQLRPWDLELIPLAEQISRWRAEYSAAIVEDMADTCQQFLPEFTLTFSFQRGWEKETDYAEVLERNFERDRMLTYTAHGPHKADFRIRADGAPVEDTLSRGQLKLLMCALRLAQGEFLTRVSGRRCLYLIDDFASELDDARRGLLSSRLKATQSQVFVSAISAEHVMDMSDKNSKMFRVEKGKITD.

30 to 37 (GANGSGKT) contributes to the ATP binding site.

The protein belongs to the RecF family.

Its subcellular location is the cytoplasm. Functionally, the RecF protein is involved in DNA metabolism; it is required for DNA replication and normal SOS inducibility. RecF binds preferentially to single-stranded, linear DNA. It also seems to bind ATP. This is DNA replication and repair protein RecF from Klebsiella pneumoniae subsp. pneumoniae (strain ATCC 700721 / MGH 78578).